A 414-amino-acid polypeptide reads, in one-letter code: Ornithine aminotransferase (414 aa).

Cys154 and Cys163 are joined by a disulfide. Position 262 is an N6-(pyridoxal phosphate)lysine (Lys262).

Belongs to the class-III pyridoxal-phosphate-dependent aminotransferase family. In terms of assembly, homodimer. Pyridoxal 5'-phosphate is required as a cofactor. In terms of processing, the disulfide bond between Cys-154 and Cys-163 is reduced by TRX1 which increases OAT catalytic activity.

It is found in the cytoplasm. The enzyme catalyses a 2-oxocarboxylate + L-ornithine = L-glutamate 5-semialdehyde + an L-alpha-amino acid. It carries out the reaction L-ornithine + 2-oxoglutarate = L-glutamate 5-semialdehyde + L-glutamate. It participates in amino-acid biosynthesis; L-proline biosynthesis; L-glutamate 5-semialdehyde from L-ornithine: step 1/1. With respect to regulation, unlike for mammalian OATs, activity is increased by TRX1-mediated reduction of the disulfide bond between Cys-154 and Cys-163. Binding to TRX1 may also induce conformational changes that facilitate substrate binding. Functionally, catalyzes the transamination of alpha-ketoglutarate with ornithine or N-acetylornithine and of glutamate-5-semialdehyde with glutamate and alanine. This Plasmodium chabaudi chabaudi protein is Ornithine aminotransferase.